Reading from the N-terminus, the 275-residue chain is Beta-lactamase OXA-15 (275 aa).

A signal peptide spans 1–21; sequence MAIRIFAILFSIFSLATFAHA. Catalysis depends on Ser-72, which acts as the Acyl-ester intermediate. At Lys-75 the chain carries N6-carboxylysine. 210-212 lines the substrate pocket; sequence KTG.

It belongs to the class-D beta-lactamase family.

It catalyses the reaction a beta-lactam + H2O = a substituted beta-amino acid. Hydrolyzes oxacillin, first-generation cephalosporins and ceftazidime. Does not hydrolyze cefotaxime or carbapenems. This chain is Beta-lactamase OXA-15 (bla), found in Pseudomonas aeruginosa.